Consider the following 49-residue polypeptide: Large ribosomal subunit protein bL33A (49 aa).

It belongs to the bacterial ribosomal protein bL33 family.

The polypeptide is Large ribosomal subunit protein bL33A (Lactobacillus delbrueckii subsp. bulgaricus (strain ATCC 11842 / DSM 20081 / BCRC 10696 / JCM 1002 / NBRC 13953 / NCIMB 11778 / NCTC 12712 / WDCM 00102 / Lb 14)).